Reading from the N-terminus, the 271-residue chain is Fatty acid elongase A (271 aa).

Helical transmembrane passes span 35–55 (ILFP…LQIF), 68–88 (AMFH…GIVI), 102–122 (IICK…FYLS), 139–159 (SLLF…WANL), 165–185 (CQWV…FYYF), 198–220 (HITT…WHFY), and 237–257 (TSAF…QFFV).

It belongs to the ELO family.

It is found in the membrane. The enzyme catalyses a very-long-chain acyl-CoA + malonyl-CoA + H(+) = a very-long-chain 3-oxoacyl-CoA + CO2 + CoA. In terms of biological role, fatty acid elongase with strict substrate specificity for monounsaturated fatty acids, in particular 16:1 (delta-9) to produce the unusual 18:1 (delta-11) fatty acid. This chain is Fatty acid elongase A (eloA), found in Dictyostelium discoideum (Social amoeba).